A 456-amino-acid chain; its full sequence is NADPH-ferredoxin reductase FprA (456 aa).

The FAD site is built by S17, E43, L51, and V87. NADP(+) contacts are provided by residues R113, 158 to 161 (NGNV), 202 to 203 (RR), and E214. Residues W362 and 369 to 371 (GVI) each bind FAD. G369 lines the NADP(+) pocket.

Belongs to the ferredoxin--NADP reductase type 1 family. In terms of assembly, monomer. FAD serves as cofactor.

It catalyses the reaction 2 reduced [2Fe-2S]-[ferredoxin] + NADP(+) + H(+) = 2 oxidized [2Fe-2S]-[ferredoxin] + NADPH. Functionally, may serve as electron transfer protein and supply electrons to P450 systems. This chain is NADPH-ferredoxin reductase FprA (fprA), found in Mycobacterium leprae (strain TN).